The following is a 104-amino-acid chain: Large ribosomal subunit protein uL24 (104 aa).

The protein belongs to the universal ribosomal protein uL24 family. In terms of assembly, part of the 50S ribosomal subunit.

Its function is as follows. One of two assembly initiator proteins, it binds directly to the 5'-end of the 23S rRNA, where it nucleates assembly of the 50S subunit. In terms of biological role, one of the proteins that surrounds the polypeptide exit tunnel on the outside of the subunit. In Saccharopolyspora erythraea (strain ATCC 11635 / DSM 40517 / JCM 4748 / NBRC 13426 / NCIMB 8594 / NRRL 2338), this protein is Large ribosomal subunit protein uL24.